Reading from the N-terminus, the 158-residue chain is ATP synthase subunit b', chloroplastic (158 aa).

The chain crosses the membrane as a helical span at residues alanine 25–phenylalanine 45.

This sequence belongs to the ATPase B chain family. F-type ATPases have 2 components, F(1) - the catalytic core - and F(0) - the membrane proton channel. F(1) has five subunits: alpha(3), beta(3), gamma(1), delta(1), epsilon(1). F(0) has four main subunits: a(1), b(1), b'(1) and c(10-14). The alpha and beta chains form an alternating ring which encloses part of the gamma chain. F(1) is attached to F(0) by a central stalk formed by the gamma and epsilon chains, while a peripheral stalk is formed by the delta, b and b' chains.

The protein localises to the plastid. It is found in the chloroplast thylakoid membrane. Its function is as follows. F(1)F(0) ATP synthase produces ATP from ADP in the presence of a proton or sodium gradient. F-type ATPases consist of two structural domains, F(1) containing the extramembraneous catalytic core and F(0) containing the membrane proton channel, linked together by a central stalk and a peripheral stalk. During catalysis, ATP synthesis in the catalytic domain of F(1) is coupled via a rotary mechanism of the central stalk subunits to proton translocation. Functionally, component of the F(0) channel, it forms part of the peripheral stalk, linking F(1) to F(0). The b'-subunit is a diverged and duplicated form of b found in plants and photosynthetic bacteria. The sequence is that of ATP synthase subunit b', chloroplastic from Gracilaria tenuistipitata var. liui (Red alga).